We begin with the raw amino-acid sequence, 89 residues long: Dynein light chain 2, cytoplasmic (89 aa).

Belongs to the dynein light chain family. In terms of assembly, homodimer. The cytoplasmic dynein 1 complex consists of two catalytic heavy chains (HCs) and a number of non-catalytic subunits which present intermediate chains (ICs), light intermediate chains (LICs) and light chains (LCs); the composition seems to vary in respect to the IC, LIC and LC composition. The heavy chain homodimer serves as a scaffold for the probable homodimeric assembly of the respective non-catalytic subunits. Dynein ICs and LICs bind directly to the HC dimer and the LCs assemble on the IC dimer. Interacts with DYNC1I1. Interacts with BMF. Component of the myosin V motor complex. Interacts with BCAS1. Interacts with Basson/BSN. Interacts with AMBRA1 (via TQT motifs); tethering AMBRA1 to the cytoskeleton. Interacts with IQUB.

The protein resides in the cytoplasm. The protein localises to the cytoskeleton. In terms of biological role, acts as one of several non-catalytic accessory components of the cytoplasmic dynein 1 complex that are thought to be involved in linking dynein to cargos and to adapter proteins that regulate dynein function. Cytoplasmic dynein 1 acts as a motor for the intracellular retrograde motility of vesicles and organelles along microtubules. May play a role in changing or maintaining the spatial distribution of cytoskeletal structures. This chain is Dynein light chain 2, cytoplasmic (DYNLL2), found in Homo sapiens (Human).